Reading from the N-terminus, the 256-residue chain is MVADKSKKSKIEEKGEEENLEQIDAELVLSIEKLQEIQDDLEKINEKASDEVLEVEQKYNVIRKPVYDKRNEVIQSIPGFWMTAFLSHPALGDLLTEEDQKIFKYLNSLEVEDAKDVKSGYSITFHFTSNPFFEDAKLTKTFTFLEEGTTKITATPIKWKEGKGLPNGVNHDDKKGNKRALPEESFFTWFTDAQHKEDAGDEIHDEVADIIKEDLWSNPLTYFNNDADEEDFDGDDDGDEEGEEDDDDEEEEDGEE.

Residues 23–64 (IDAELVLSIEKLQEIQDDLEKINEKASDEVLEVEQKYNVIRK) adopt a coiled-coil conformation. Residues 220 to 256 (LTYFNNDADEEDFDGDDDGDEEGEEDDDDEEEEDGEE) form a disordered region. Residues 226–256 (DADEEDFDGDDDGDEEGEEDDDDEEEEDGEE) show a composition bias toward acidic residues.

Belongs to the nucleosome assembly protein (NAP) family. Can form homomeric and heteromeric protein complexes with NRP2. Binds histones H2A and H2B and associates with chromatin in vivo. As to expression, ubiquitous.

It localises to the cytoplasm. The protein localises to the nucleus. In terms of biological role, acts as a histone H2A/H2B chaperone in nucleosome assembly, playing a critical role for the correct expression of genes involved in root proliferation and patterning. Required with NRP2 for the maintenance of cell proliferation and differentiation in postembryonic root growth. Involved in both intramolecular and intermolecular somatic homologous recombination. This chain is NAP1-related protein 1 (NRP1), found in Arabidopsis thaliana (Mouse-ear cress).